We begin with the raw amino-acid sequence, 433 residues long: Enolase (433 aa).

Glutamine 167 is a binding site for (2R)-2-phosphoglycerate. Residue glutamate 209 is the Proton donor of the active site. 3 residues coordinate Mg(2+): aspartate 246, glutamate 291, and aspartate 318. 4 residues coordinate (2R)-2-phosphoglycerate: lysine 343, arginine 372, serine 373, and lysine 394. The Proton acceptor role is filled by lysine 343.

Belongs to the enolase family. As to quaternary structure, component of the RNA degradosome, a multiprotein complex involved in RNA processing and mRNA degradation. Requires Mg(2+) as cofactor.

It localises to the cytoplasm. The protein localises to the secreted. Its subcellular location is the cell surface. It catalyses the reaction (2R)-2-phosphoglycerate = phosphoenolpyruvate + H2O. It participates in carbohydrate degradation; glycolysis; pyruvate from D-glyceraldehyde 3-phosphate: step 4/5. Functionally, catalyzes the reversible conversion of 2-phosphoglycerate (2-PG) into phosphoenolpyruvate (PEP). It is essential for the degradation of carbohydrates via glycolysis. This is Enolase from Pasteurella multocida (strain Pm70).